Here is a 727-residue protein sequence, read N- to C-terminus: Probable acyl-activating enzyme 18, peroxisomal (727 aa).

The Microbody targeting signal signature appears at serine 725–isoleucine 727.

The protein belongs to the ATP-dependent AMP-binding enzyme family. Expressed in flowers.

The protein resides in the peroxisome. Functionally, may be involved in the peroxisomal activation of 2,4-dichlorophenoxybutyric acid (2,4-DB), a precursor of active auxins that inhibit root growth. This chain is Probable acyl-activating enzyme 18, peroxisomal (AAE18), found in Arabidopsis thaliana (Mouse-ear cress).